Consider the following 305-residue polypeptide: UDP-3-O-acyl-N-acetylglucosamine deacetylase (305 aa).

His-79, His-238, and Asp-242 together coordinate Zn(2+). His-265 (proton donor) is an active-site residue.

The protein belongs to the LpxC family. Zn(2+) is required as a cofactor.

The enzyme catalyses a UDP-3-O-[(3R)-3-hydroxyacyl]-N-acetyl-alpha-D-glucosamine + H2O = a UDP-3-O-[(3R)-3-hydroxyacyl]-alpha-D-glucosamine + acetate. It participates in glycolipid biosynthesis; lipid IV(A) biosynthesis; lipid IV(A) from (3R)-3-hydroxytetradecanoyl-[acyl-carrier-protein] and UDP-N-acetyl-alpha-D-glucosamine: step 2/6. Functionally, catalyzes the hydrolysis of UDP-3-O-myristoyl-N-acetylglucosamine to form UDP-3-O-myristoylglucosamine and acetate, the committed step in lipid A biosynthesis. This Salmonella arizonae (strain ATCC BAA-731 / CDC346-86 / RSK2980) protein is UDP-3-O-acyl-N-acetylglucosamine deacetylase.